The primary structure comprises 262 residues: Aconitate isomerase (262 aa).

Positions 1–22 (MFPRLPTLALGALLLASTPLLA) are cleaved as a signal peptide.

Monomer.

The enzyme catalyses trans-aconitate = cis-aconitate. With respect to regulation, activated more than 1.5 fold by Ca(2+), Mg(2+), Mn(2+), Ni(2+), Fe(2+), DDT and 1,10-phenanthroline. Strongly inhibited by Ag(+) and Hg(+). Inhibited by addition of 20% (v/v) glycerol. No effect by addition of NADH or NADPH. Involved in assimilation of trans-aconitic acid. Preference for cis-aconitic acid is 14-fold higher than for trans-aconitic acid. Not active on intermediates of tricarboxylic acid (TCA) cycle including citric acid, succinic acid, fumaric acid, and 2-oxoglutaric acid or on other dicarboxilic acids including itaconic acid, formic acid, citraconic acid or maleic acid. This chain is Aconitate isomerase, found in Pseudomonas sp.